A 325-amino-acid polypeptide reads, in one-letter code: Protein TMED8 (325 aa).

The tract at residues 1–78 is disordered; the sequence is MSDLQAAEGP…MVSPVSKDAT (78 aa). One can recognise a GOLD domain in the interval 159 to 323; sequence PPCIWTFAKV…NKTLYFHIYY (165 aa). At Lys-169 the chain carries N6-acetyllysine. The interval 232-267 is disordered; that stretch reads TVQVSDSSDDEDEEEEEEEEIEEPVPAGDVERGSRS. Acidic residues predominate over residues 238 to 254; it reads SSDDEDEEEEEEEEIEE.

In Homo sapiens (Human), this protein is Protein TMED8 (TMED8).